The sequence spans 198 residues: MNREEQLGVLESLLFAAGDAGLSTEQLTEVMEITHIEALNLLELLSERYNESADRGLILLELAGTFQLATKKAHAEFLRKLVEVPSNTVLSQASLETLAIIAYRQPVTRMEVDEVRGVQTDGPIRTLVAKGLVTDKGRVDGAGRAKLYVTTSEFLDAFGLNSLEDLPKLADPATDEPDQNEMDLFFDRFNQSKEQEEE.

The segment at 168–198 (KLADPATDEPDQNEMDLFFDRFNQSKEQEEE) is disordered.

It belongs to the ScpB family. Homodimer. Homodimerization may be required to stabilize the binding of ScpA to the Smc head domains. Component of a cohesin-like complex composed of ScpA, ScpB and the Smc homodimer, in which ScpA and ScpB bind to the head domain of Smc. The presence of the three proteins is required for the association of the complex with DNA.

Its subcellular location is the cytoplasm. In terms of biological role, participates in chromosomal partition during cell division. May act via the formation of a condensin-like complex containing Smc and ScpA that pull DNA away from mid-cell into both cell halves. The sequence is that of Segregation and condensation protein B from Listeria monocytogenes serovar 1/2a (strain ATCC BAA-679 / EGD-e).